The sequence spans 218 residues: Adenylate kinase (218 aa).

11 to 16 (GAGKGT) provides a ligand contact to ATP. The interval 31-60 (STGDMFREAMANKTKVGLEAKSYIDKGNLV) is NMP. AMP is bound by residues Thr32, Arg37, 58–60 (NLV), 86–89 (GFPR), and Gln93. An LID region spans residues 127-165 (ARYMCKNCGATYNKLSKQPKVEGTCDRCGSHEFYQREDD). ATP is bound at residue Arg128. The Zn(2+) site is built by Cys131 and Cys134. Position 137–138 (137–138 (TY)) interacts with ATP. 2 residues coordinate Zn(2+): Cys151 and Cys154. AMP contacts are provided by Arg162 and Arg173. Gln201 is a binding site for ATP.

This sequence belongs to the adenylate kinase family. Monomer.

The protein resides in the cytoplasm. The catalysed reaction is AMP + ATP = 2 ADP. It participates in purine metabolism; AMP biosynthesis via salvage pathway; AMP from ADP: step 1/1. In terms of biological role, catalyzes the reversible transfer of the terminal phosphate group between ATP and AMP. Plays an important role in cellular energy homeostasis and in adenine nucleotide metabolism. The sequence is that of Adenylate kinase from Lactobacillus helveticus (strain DPC 4571).